A 545-amino-acid chain; its full sequence is T-complex protein 1 subunit alpha (545 aa).

Ser-2 is subject to N-acetylserine.

Belongs to the TCP-1 chaperonin family. As to quaternary structure, heterooligomeric complex of about 850 to 900 kDa that forms two stacked rings, 12 to 16 nm in diameter.

The protein resides in the cytoplasm. Its function is as follows. Molecular chaperone; assists the folding of proteins upon ATP hydrolysis. Known to play a role, in vitro, in the folding of actin and tubulin. This is T-complex protein 1 subunit alpha from Arabidopsis thaliana (Mouse-ear cress).